The chain runs to 184 residues: UPF0149 protein Avin_47340 (184 aa).

This sequence belongs to the UPF0149 family.

The protein is UPF0149 protein Avin_47340 of Azotobacter vinelandii (strain DJ / ATCC BAA-1303).